The sequence spans 485 residues: Putative aldehyde dehydrogenase AldY (485 aa).

Position 231–236 (Gly-231–Gly-236) interacts with NAD(+). Catalysis depends on residues Glu-253 and Cys-287.

This sequence belongs to the aldehyde dehydrogenase family.

The enzyme catalyses an aldehyde + NAD(+) + H2O = a carboxylate + NADH + 2 H(+). Functionally, may contribute to protect cells against stress due to ethanol and related compounds. This Bacillus subtilis (strain 168) protein is Putative aldehyde dehydrogenase AldY (aldY).